We begin with the raw amino-acid sequence, 215 residues long: NAD(P)H-quinone oxidoreductase subunit I (215 aa).

2 consecutive 4Fe-4S ferredoxin-type domains span residues 55–84 and 95–124; these read GRIH…VDWV and RNYS…MTEE. Cysteine 64, cysteine 67, cysteine 70, cysteine 74, cysteine 104, cysteine 107, cysteine 110, and cysteine 114 together coordinate [4Fe-4S] cluster. Positions 169-180 are enriched in basic and acidic residues; sequence MDPHGVASDRPR. A disordered region spans residues 169-215; that stretch reads MDPHGVASDRPRAGQLPAQVLETLTPPAKPTAKNDGQSSSEAKEGDA.

The protein belongs to the complex I 23 kDa subunit family. As to quaternary structure, NDH-1 is composed of at least 11 different subunits. Requires [4Fe-4S] cluster as cofactor.

Its subcellular location is the cellular thylakoid membrane. It carries out the reaction a plastoquinone + NADH + (n+1) H(+)(in) = a plastoquinol + NAD(+) + n H(+)(out). The catalysed reaction is a plastoquinone + NADPH + (n+1) H(+)(in) = a plastoquinol + NADP(+) + n H(+)(out). In terms of biological role, NDH-1 shuttles electrons from an unknown electron donor, via FMN and iron-sulfur (Fe-S) centers, to quinones in the respiratory and/or the photosynthetic chain. The immediate electron acceptor for the enzyme in this species is believed to be plastoquinone. Couples the redox reaction to proton translocation, and thus conserves the redox energy in a proton gradient. This is NAD(P)H-quinone oxidoreductase subunit I from Synechococcus sp. (strain CC9605).